Here is a 442-residue protein sequence, read N- to C-terminus: Septin-8 (442 aa).

Positions 1–16 (MAATDLERISNAEPEP) are enriched in basic and acidic residues. The interval 1-21 (MAATDLERISNAEPEPRSLSL) is disordered. The residue at position 2 (Ala-2) is an N-acetylalanine. At Ser-10 the chain carries Phosphoserine. A Septin-type G domain is found at 41–307 (QGFSFNILCV…ELYRRCKLEE (267 aa)). The tract at residues 51–58 (GETGIGKS) is G1 motif. Residues 51–58 (GETGIGKS), Gly-106, 187–195 (KADTISKSE), Gly-241, and Arg-256 contribute to the GTP site. The interval 103–106 (DAVG) is G3 motif. The interval 186–189 (AKAD) is G4 motif. Positions 322–407 (LQETYEAKRK…FNCRKAAMEA (86 aa)) form a coiled coil. The segment covering 411-420 (QALHATSQQP) has biased composition (polar residues). Residues 411–442 (QALHATSQQPLRKDKDKKKVGGWSSIYSVTIP) are disordered.

Belongs to the TRAFAC class TrmE-Era-EngA-EngB-Septin-like GTPase superfamily. Septin GTPase family. Septins polymerize into heterooligomeric protein complexes that form filaments, and can associate with cellular membranes, actin filaments and microtubules. GTPase activity is required for filament formation. Interacts with SEPTIN7. Interacts with CDK14, SEPTIN4 and SEPTIN5. Interacts with VAMP2; the interaction inhibits interaction of VAMP2 with SYP. Interacts with STX1A. Expressed in cerebrum, hippocampus and cerebellum (at protein level). Expressed in heart (at protein level).

The protein resides in the cytoplasm. It is found in the cytoskeleton. Its subcellular location is the synapse. It localises to the cell projection. The protein localises to the axon. The protein resides in the cytoplasmic vesicle. It is found in the secretory vesicle. Its subcellular location is the synaptic vesicle membrane. It localises to the presynapse. Its function is as follows. Filament-forming cytoskeletal GTPase. May play a role in platelet secretion. Seems to participate in the process of SNARE complex formation in synaptic vesicles. In Rattus norvegicus (Rat), this protein is Septin-8.